The chain runs to 356 residues: Probable farnesyl diphosphate synthase DDB_G0278823 (356 aa).

Isopentenyl diphosphate-binding residues include Lys-55, Arg-58, and Gln-94. The Mg(2+) site is built by Asp-101 and Asp-105. Residue Arg-110 participates in dimethylallyl diphosphate binding. Arg-111 is an isopentenyl diphosphate binding site. 5 residues coordinate dimethylallyl diphosphate: Lys-203, Thr-204, Gln-243, Lys-260, and Lys-269.

It belongs to the FPP/GGPP synthase family. It depends on Mg(2+) as a cofactor.

The protein localises to the cytoplasm. The enzyme catalyses isopentenyl diphosphate + dimethylallyl diphosphate = (2E)-geranyl diphosphate + diphosphate. It carries out the reaction isopentenyl diphosphate + (2E)-geranyl diphosphate = (2E,6E)-farnesyl diphosphate + diphosphate. The protein operates within isoprenoid biosynthesis; farnesyl diphosphate biosynthesis; farnesyl diphosphate from geranyl diphosphate and isopentenyl diphosphate: step 1/1. Its pathway is isoprenoid biosynthesis; geranyl diphosphate biosynthesis; geranyl diphosphate from dimethylallyl diphosphate and isopentenyl diphosphate: step 1/1. Inhibited by aminobisphosphonate drugs (aBP), such as risedronate and alendronate. Functionally, key enzyme in isoprenoid biosynthesis which catalyzes the formation of farnesyl diphosphate (FPP), a sterol precursor. In Dictyostelium discoideum (Social amoeba), this protein is Probable farnesyl diphosphate synthase DDB_G0278823.